A 340-amino-acid chain; its full sequence is Formimidoylglutamase (340 aa).

Residues His-129, Asp-160, His-162, Asp-164, Asp-257, and Asp-259 each coordinate Mn(2+).

The protein belongs to the arginase family. Requires Mn(2+) as cofactor.

The catalysed reaction is N-formimidoyl-L-glutamate + H2O = formamide + L-glutamate. It participates in amino-acid degradation; L-histidine degradation into L-glutamate; L-glutamate from N-formimidoyl-L-glutamate (hydrolase route): step 1/1. Its function is as follows. Catalyzes the conversion of N-formimidoyl-L-glutamate to L-glutamate and formamide. In Vibrio parahaemolyticus serotype O3:K6 (strain RIMD 2210633), this protein is Formimidoylglutamase.